The sequence spans 1026 residues: Multidrug resistance protein MdtC (1026 aa).

11 helical membrane passes run 15 to 35, 333 to 353, 360 to 380, 387 to 407, 431 to 451, 463 to 483, 528 to 548, 853 to 873, 897 to 917, 953 to 973, and 984 to 1004; these read ILIA…LPVA, EVEE…FLFL, LIPA…MYLC, LSLM…IVVL, VGFT…PLLL, FAVT…TLTP, LVGV…IAIP, LILI…LYES, LFNA…IGIV, PIMM…LSGG, and ITIV…TPVV.

It belongs to the resistance-nodulation-cell division (RND) (TC 2.A.6) family. MdtC subfamily. As to quaternary structure, part of a tripartite efflux system composed of MdtA, MdtB and MdtC. MdtC forms a heteromultimer with MdtB.

The protein resides in the cell inner membrane. This Salmonella dublin (strain CT_02021853) protein is Multidrug resistance protein MdtC.